The chain runs to 367 residues: MGAHPTAHGPRTLEDGSPTCKLIAWEVTRSCNLACKHCRAEAHMEPYPGEFSTDEAKALIDTFPDVGNPIIIFTGGDPMMRGDVYELIAYATDKGLRCVMSPNGTLITPEHAQRMKASGVQRCSISIDGPDAASHDAFRGVPGAFEQSMRGIGYLRDAGIEFQINTTVTRDNLHSFKDIFKLCERIGAVAWHIFLLVPTGRAAGLSDQVISAAEYEEVLNWFYDFRKTTSMHLKATCAPHYYRIMRQRAKEEGVSVTPDNFGMDAMTRGCLGGTGFCFISHTGQVQPCGYLELDCGNVRNTPFPEIWRKSEHFRQFRTQEEYTGKCGPCEYHKVCGGCRARAYNMSGDHMAEEPLCSYKPRRMTPCR.

The Radical SAM core domain occupies Asp15–Ala238. Cys31, Cys35, and Cys38 together coordinate [4Fe-4S] cluster.

It belongs to the radical SAM superfamily. Requires [4Fe-4S] cluster as cofactor.

The enzyme catalyses Fe-coproporphyrin III + 2 S-adenosyl-L-methionine = heme b + 2 5'-deoxyadenosine + 2 L-methionine + 2 CO2. Its pathway is porphyrin-containing compound metabolism; protoheme biosynthesis. In terms of biological role, involved in siroheme-dependent heme b biosynthesis. Catalyzes the conversion of Fe-coproporphyrin III into heme by the oxidative decarboxylation of two propionate side chains. The sequence is that of AdoMet-dependent heme synthase from Nitratidesulfovibrio vulgaris (strain ATCC 29579 / DSM 644 / CCUG 34227 / NCIMB 8303 / VKM B-1760 / Hildenborough) (Desulfovibrio vulgaris).